The sequence spans 239 residues: MTRDQAREKVIFALDTGEFAHVQYWAETLSDKVGMYKIGKQLFTACGPAAVRMIQKFGGEVFLDLKFHDIPNTVAMASVEAARMGVKLFNLHALGGYEMMAKTVEALDKEFKGGDRAKVLAVTILTSSTEETLKDLGIEHTVPDMVVRLATLARKAGIDGVVASPREIPLIREACGSDFLIVTPGVRPSFAALNDQKRVMTPAEAVKAGSDYLVIGRPIGDAPDPAAAAELILGEIVAG.

Residues Asp15, Lys37, 64–73, Thr126, Arg187, Gln196, Gly216, and Arg217 contribute to the substrate site; that span reads DLKFHDIPNT. The Proton donor role is filled by Lys66.

This sequence belongs to the OMP decarboxylase family. Type 1 subfamily. As to quaternary structure, homodimer.

It carries out the reaction orotidine 5'-phosphate + H(+) = UMP + CO2. Its pathway is pyrimidine metabolism; UMP biosynthesis via de novo pathway; UMP from orotate: step 2/2. Functionally, catalyzes the decarboxylation of orotidine 5'-monophosphate (OMP) to uridine 5'-monophosphate (UMP). In Geobacter metallireducens (strain ATCC 53774 / DSM 7210 / GS-15), this protein is Orotidine 5'-phosphate decarboxylase.